The following is a 547-amino-acid chain: Chaperonin GroEL (547 aa).

Residues T30–P33, K51, D87–T91, G415, and D496 contribute to the ATP site.

Belongs to the chaperonin (HSP60) family. Forms a cylinder of 14 subunits composed of two heptameric rings stacked back-to-back. Interacts with the co-chaperonin GroES.

The protein localises to the cytoplasm. It catalyses the reaction ATP + H2O + a folded polypeptide = ADP + phosphate + an unfolded polypeptide.. Functionally, together with its co-chaperonin GroES, plays an essential role in assisting protein folding. The GroEL-GroES system forms a nano-cage that allows encapsulation of the non-native substrate proteins and provides a physical environment optimized to promote and accelerate protein folding. In Haemophilus ducreyi (strain 35000HP / ATCC 700724), this protein is Chaperonin GroEL.